Consider the following 781-residue polypeptide: uncharacterized protein (781 aa).

Disordered regions lie at residues M1–D27 and N56–H268. Positions E11–D27 are enriched in acidic residues. Over residues L57–K73 the composition is skewed to basic and acidic residues. A compositionally biased stretch (basic residues) spans K80–K94. Acidic residues predominate over residues S99–Y116. Composition is skewed to basic and acidic residues over residues D123–N144, E170–V188, K216–N227, and D251–H268. Positions N616–N655 form a coiled coil.

This is an uncharacterized protein from Plasmodium falciparum (isolate 3D7).